Here is a 44-residue protein sequence, read N- to C-terminus: DNA-directed RNA polymerase subunit Rpo12 (44 aa).

Cys-8, Cys-22, and Cys-25 together coordinate Zn(2+).

This sequence belongs to the archaeal Rpo12/eukaryotic RPC10 RNA polymerase subunit family. Part of the RNA polymerase complex. Zn(2+) is required as a cofactor.

The protein resides in the cytoplasm. The enzyme catalyses RNA(n) + a ribonucleoside 5'-triphosphate = RNA(n+1) + diphosphate. Functionally, DNA-dependent RNA polymerase (RNAP) catalyzes the transcription of DNA into RNA using the four ribonucleoside triphosphates as substrates. The sequence is that of DNA-directed RNA polymerase subunit Rpo12 from Haloquadratum walsbyi (strain DSM 16790 / HBSQ001).